We begin with the raw amino-acid sequence, 918 residues long: Glutamate receptor 2.5 (918 aa).

The first 30 residues, 1-30 (MSLFHHLVSRFLSLWLLIFLVFLVLSLGKS), serve as a signal peptide directing secretion. Residues 31–586 (QKEALQVKVG…WVFLKPLTKE (556 aa)) are Extracellular-facing. Residues N46, N58, N122, N336, N340, and N546 are each glycosylated (N-linked (GlcNAc...) asparagine). A helical transmembrane segment spans residues 587 to 607 (LWLVTAASFLYIGIMVWIFEY). The Cytoplasmic portion of the chain corresponds to 608 to 616 (QADEEFREQ). The helical transmembrane segment at 617-637 (MIIDKISSVFYFSFSTLFFAH) threads the bilayer. Residues 638–647 (RRPSESFFTR) are Cytoplasmic-facing. A helical membrane pass occupies residues 648–668 (VLVVVWCFVLLILTQSYTATL). The Extracellular portion of the chain corresponds to 669 to 828 (TSMLTVQELR…DSPIQLDHHS (160 aa)). Residue N791 is glycosylated (N-linked (GlcNAc...) asparagine). The chain crosses the membrane as a helical span at residues 829–849 (FEALFLIVFVVSVILLLLMLA). At 850–918 (SRGYQERQHN…VAPLSRLKSA (69 aa)) the chain is on the cytoplasmic side. Residues 857–881 (QHNASPNLPNDQANAAQEEVNEEGN) are disordered. Residues 866–881 (NDQANAAQEEVNEEGN) show a composition bias toward low complexity.

It belongs to the glutamate-gated ion channel (TC 1.A.10.1) family. May form heteromers. As to expression, expressed predominantly in roots.

It is found in the membrane. Its function is as follows. Glutamate-gated receptor that probably acts as a non-selective cation channel. May be involved in light-signal transduction and calcium homeostasis via the regulation of calcium influx into cells. This is Glutamate receptor 2.5 (GLR2.5) from Arabidopsis thaliana (Mouse-ear cress).